Reading from the N-terminus, the 356-residue chain is Arginine kinase Lit v 2.0101 (356 aa).

The Phosphagen kinase N-terminal domain occupies 9–91 (KLEAGFKKLE…FDPIIEDYHV (83 aa)). 64 to 68 (GVGIY) provides a ligand contact to L-arginine. Positions 119-356 (FVISTRVRCG…LELIKIEKEM (238 aa)) constitute a Phosphagen kinase C-terminal domain. ATP contacts are provided by residues 122-126 (STRVR) and His-185. Residue Glu-225 participates in L-arginine binding. Position 229 (Arg-229) interacts with ATP. L-arginine is bound at residue Cys-271. ATP is bound by residues 280 to 284 (RASVH) and 309 to 314 (RGTRGE). Glu-314 serves as a coordination point for L-arginine.

Belongs to the ATP:guanido phosphotransferase family. As to quaternary structure, monomer. In terms of tissue distribution, muscle (at protein level).

The enzyme catalyses L-arginine + ATP = N(omega)-phospho-L-arginine + ADP + H(+). It catalyses the reaction dTDP + ATP = dTTP + ADP. Functionally, catalyzes the reversible transfer of high energy ATP gamma-phosphate group to L-arginine. Has nucleoside diphosphate kinase-like activity toward dTDP. Binds and phosphorylates dTDP using ATP as a phosphate donor. Does not phosphorylate dADP, dCDP, dGDP, dTMP or thymidine. This Penaeus vannamei (Whiteleg shrimp) protein is Arginine kinase Lit v 2.0101.